A 423-amino-acid polypeptide reads, in one-letter code: Histidine--tRNA ligase (423 aa).

The protein belongs to the class-II aminoacyl-tRNA synthetase family. As to quaternary structure, homodimer.

Its subcellular location is the cytoplasm. The catalysed reaction is tRNA(His) + L-histidine + ATP = L-histidyl-tRNA(His) + AMP + diphosphate + H(+). This Desulfosudis oleivorans (strain DSM 6200 / JCM 39069 / Hxd3) (Desulfococcus oleovorans) protein is Histidine--tRNA ligase.